We begin with the raw amino-acid sequence, 527 residues long: Catalase (527 aa).

A2 carries the N-acetylalanine modification. Position 9 is a phosphoserine (S9). Catalysis depends on residues H75 and N148. NADP(+) is bound by residues H194, S201, R203, and N213. K221 bears the N6-succinyllysine mark. K233 carries the post-translational modification N6-acetyllysine. K237, W303, H305, and K306 together coordinate NADP(+). K306 carries the post-translational modification N6-acetyllysine; alternate. Position 306 is an N6-succinyllysine; alternate (K306). Y358 provides a ligand contact to heme. 2 positions are modified to phosphoserine: S417 and S422. K480 carries the N6-acetyllysine; alternate modification. Position 480 is an N6-succinyllysine; alternate (K480). The residue at position 499 (K499) is an N6-acetyllysine. Residue T511 is modified to Phosphothreonine. S515 and S517 each carry phosphoserine. Residues 524–527 carry the Microbody targeting signal; atypical motif; that stretch reads KANL.

It belongs to the catalase family. In terms of assembly, homotetramer. Interacts (via microbody targeting signal) with PEX5, monomeric form interacts with PEX5, leading to its translocation into peroxisomes. It depends on heme as a cofactor. Requires NADP(+) as cofactor.

It is found in the peroxisome matrix. The enzyme catalyses 2 H2O2 = O2 + 2 H2O. Functionally, catalyzes the degradation of hydrogen peroxide (H(2)O(2)) generated by peroxisomal oxidases to water and oxygen, thereby protecting cells from the toxic effects of hydrogen peroxide. Promotes growth of cells including T-cells, B-cells, myeloid leukemia cells, melanoma cells, mastocytoma cells and normal and transformed fibroblast cells. The polypeptide is Catalase (CAT) (Homo sapiens (Human)).